Here is a 412-residue protein sequence, read N- to C-terminus: Na(+)-translocating NADH-quinone reductase subunit B (412 aa).

3 helical membrane-spanning segments follow: residues 57-77 (MILVWFAVFPAMFWGMYNVGL), 127-147 (VFFLPIYITVFIVGGFWEVLF), and 163-183 (SILFALIVPPTLPLWQAALGI). Thr-236 bears the FMN phosphoryl threonine mark. The next 5 membrane-spanning stretches (helical) occupy residues 270 to 290 (GSIGEVSTLMILIGGAIILFG), 297 to 317 (IVAGVMIGMIATATLFNVIGS), 322 to 342 (MFSMPWYWHLVLGGFAFGMMF), 358 to 378 (WSYGVLIGVMCVLIRVVNPAY), and 381 to 401 (GMMLAILFANLFAPLFDYLVV).

This sequence belongs to the NqrB/RnfD family. Composed of six subunits; NqrA, NqrB, NqrC, NqrD, NqrE and NqrF. FMN serves as cofactor.

It is found in the cell inner membrane. It catalyses the reaction a ubiquinone + n Na(+)(in) + NADH + H(+) = a ubiquinol + n Na(+)(out) + NAD(+). Its function is as follows. NQR complex catalyzes the reduction of ubiquinone-1 to ubiquinol by two successive reactions, coupled with the transport of Na(+) ions from the cytoplasm to the periplasm. NqrA to NqrE are probably involved in the second step, the conversion of ubisemiquinone to ubiquinol. The protein is Na(+)-translocating NADH-quinone reductase subunit B of Klebsiella pneumoniae (strain 342).